The primary structure comprises 277 residues: MEMO1 family protein TRQ2_0860 (277 aa).

This sequence belongs to the MEMO1 family.

The protein is MEMO1 family protein TRQ2_0860 of Thermotoga sp. (strain RQ2).